Consider the following 380-residue polypeptide: Tryptophan--tRNA ligase (380 aa).

Residues 81-89 (PSLGMHIGH) carry the 'HIGH' region motif. Residues 253 to 257 (KMSSS) carry the 'KMSKS' region motif.

Belongs to the class-I aminoacyl-tRNA synthetase family.

The protein resides in the cytoplasm. It carries out the reaction tRNA(Trp) + L-tryptophan + ATP = L-tryptophyl-tRNA(Trp) + AMP + diphosphate + H(+). This chain is Tryptophan--tRNA ligase, found in Saccharolobus solfataricus (strain ATCC 35092 / DSM 1617 / JCM 11322 / P2) (Sulfolobus solfataricus).